We begin with the raw amino-acid sequence, 314 residues long: D-alanine--D-alanine ligase (314 aa).

The ATP-grasp domain occupies 115-310; it reads KQVWQSVGLV…FNELVLEILA (196 aa). 141–196 lines the ATP pocket; the sequence is LDSLGGQGFVKPAHEGSSIGMSVVSTAQELKAAYEKAAHYDAKVLVERRIVGREFT. Positions 264, 277, and 279 each coordinate Mg(2+).

Belongs to the D-alanine--D-alanine ligase family. It depends on Mg(2+) as a cofactor. Mn(2+) serves as cofactor.

It is found in the cytoplasm. It catalyses the reaction 2 D-alanine + ATP = D-alanyl-D-alanine + ADP + phosphate + H(+). Its pathway is cell wall biogenesis; peptidoglycan biosynthesis. In terms of biological role, cell wall formation. The polypeptide is D-alanine--D-alanine ligase (Saccharophagus degradans (strain 2-40 / ATCC 43961 / DSM 17024)).